Reading from the N-terminus, the 512-residue chain is Kelch repeat protein C2 (512 aa).

One can recognise a BTB domain in the interval 2–67 (ESVIFSINGE…MRWKKINITV (66 aa)). Positions 102–176 (CIRMFNFSKR…LLKWIHKNPN (75 aa)) constitute a BACK domain. 6 Kelch repeats span residues 216–261 (IKHN…LYNC), 262–307 (LYII…VNDG), 309–354 (LYVI…FVND), 356–403 (IYVM…EYDG), 405–449 (IYAI…SCGD), and 452–498 (LIIA…THKS).

It belongs to the poxviruses Kelch family.

The polypeptide is Kelch repeat protein C2 (Camelus).